A 126-amino-acid chain; its full sequence is MLVPLHFLAVGVGAAAGAWLRWLLGLKFNVSGWPWGTLAANLGGGYLIGLILGLITLHPEWPAWVRLALVTGFLGGLTTFSTFSAEVVQYLERGQFGHAAGYAVVSLAGSLCLTALGLATAHLMGR.

A run of 4 helical transmembrane segments spans residues 5–25, 35–55, 68–88, and 99–119; these read LHFLAVGVGAAAGAWLRWLLG, WGTLAANLGGGYLIGLILGLI, ALVTGFLGGLTTFSTFSAEVV, and AAGYAVVSLAGSLCLTALGLA. Gly-75 and Thr-78 together coordinate Na(+).

Belongs to the fluoride channel Fluc/FEX (TC 1.A.43) family.

It localises to the cell inner membrane. The catalysed reaction is fluoride(in) = fluoride(out). With respect to regulation, na(+) is not transported, but it plays an essential structural role and its presence is essential for fluoride channel function. Functionally, fluoride-specific ion channel. Important for reducing fluoride concentration in the cell, thus reducing its toxicity. This is Fluoride-specific ion channel FluC from Bordetella avium (strain 197N).